We begin with the raw amino-acid sequence, 407 residues long: Tyrosine--tRNA ligase (407 aa).

An L-tyrosine-binding site is contributed by tyrosine 36. The 'HIGH' region signature appears at 41-50 (PTADSLHIGH). Residues tyrosine 169 and glutamine 173 each coordinate L-tyrosine. Positions 229–233 (KMGKT) match the 'KMSKS' region motif. Position 232 (lysine 232) interacts with ATP. Positions 341 to 407 (KGILDILVET…KKSYNRIVIE (67 aa)) constitute an S4 RNA-binding domain.

It belongs to the class-I aminoacyl-tRNA synthetase family. TyrS type 1 subfamily. Homodimer.

The protein localises to the cytoplasm. It catalyses the reaction tRNA(Tyr) + L-tyrosine + ATP = L-tyrosyl-tRNA(Tyr) + AMP + diphosphate + H(+). Its function is as follows. Catalyzes the attachment of tyrosine to tRNA(Tyr) in a two-step reaction: tyrosine is first activated by ATP to form Tyr-AMP and then transferred to the acceptor end of tRNA(Tyr). The sequence is that of Tyrosine--tRNA ligase from Clostridium tetani (strain Massachusetts / E88).